A 204-amino-acid polypeptide reads, in one-letter code: Ras-related protein Rab-7L1 (204 aa).

6 residues coordinate GTP: Ser33, Lys34, His35, Tyr36, Lys37, and Thr39. The Effector region motif lies at 36–44 (YKSTVGVDF). Thr71 carries the phosphothreonine; by LRRK2 modification. Residue Ser72 is modified to Phosphoserine. GTP is bound by residues Lys126, Val156, and Lys157. Residues Cys203 and Cys204 are each lipidated (S-geranylgeranyl cysteine).

It belongs to the small GTPase superfamily. Rab family. As to quaternary structure, interacts with LRRK2 (via the N-terminus); this interaction is direct and stimulates kinase activity. In terms of tissue distribution, expressed predominantly in kidney and much less in brain, heart, muscle, fat, liver, spleen, adrenal gland, ovary, thymus and lung. Not expressed in testis and intestine.

It localises to the cell membrane. It is found in the cytoplasm. The protein localises to the perinuclear region. Its subcellular location is the golgi apparatus. The protein resides in the golgi apparatus membrane. It localises to the trans-Golgi network. It is found in the cytoskeleton. The small GTPases Rab are key regulators in vesicle trafficking. Essential for maintaining the integrity of endosome-trans-Golgi network structure. Together with LRRK2, plays a role in the retrograde trafficking pathway for recycling proteins, such as mannose 6 phosphate receptor (M6PR), between lysosomes and the Golgi apparatus in a retromer-dependent manner. Recruits LRRK2 to the Golgi apparatus and stimulates LRRK2 kinase activity. Stimulates phosphorylation of RAB10 'Thr-73' by LRRK2. Regulates also neuronal process morphology in the intact central nervous system (CNS). The protein is Ras-related protein Rab-7L1 (Rab29) of Rattus norvegicus (Rat).